The following is a 629-amino-acid chain: MFYPDPFDVIIIGGGHAGTEAAMAAARMGQQTLLLTHNIDTLGQMSCNPAIGGIGKGHLVKEVDALGGLMAKAIDQAGIQFRILNASKGPAVRATRAQADRVLYKQAVRTALENQPNLMIFQQAVDDLIVENDRVVGAVTQMGLKFRAKAVVLTVGTFLDGKIHIGLDNYSGGRAGDPPSVPLARRLRELPLRVSRLKTGTPPRIDARTIDFSVLDQQHGDNPMPVFSFMGSADQHPRQVPCYVTHTNEKTHDVIRNNLDRSPMYAGVIEGIGPRYCPSIEDKVMRFADRNAHQIFLEPEGLTSNEIYPNGISTSLPFDVQMQIVRSMKGMENAKIVRPGYAIEYDFFDPRDLKPTLESKYIHGLFFAGQINGTTGYEEAAAQGLLAGLNAGRYSAEKEGWAPGRSQAYLGVLVDDLCTLGTKEPYRMFTSRAEYRLMLREDNADLRLTEVGREMGLVDDARWARFNEKLENIERERQRLRSTWVTPSTASVEEINTMLTAPLSREASGEDLLRRPEMTYAQLTSLSAFAPALDDAQAAEQVEIQVKYEGYIARQQDEIEKQQRNENTLLPATLDYRQVNGLSNEVIAKLNDHKPASIGQASRISGITPAAISILLVWLKKQGLLRRSA.

Residues 13–18, valine 125, and serine 180 contribute to the FAD site; that span reads GGGHAG. 273–287 is an NAD(+) binding site; it reads GPRYCPSIEDKVMRF. An FAD-binding site is contributed by glutamine 370.

It belongs to the MnmG family. In terms of assembly, homodimer. Heterotetramer of two MnmE and two MnmG subunits. The cofactor is FAD.

The protein localises to the cytoplasm. Functionally, NAD-binding protein involved in the addition of a carboxymethylaminomethyl (cmnm) group at the wobble position (U34) of certain tRNAs, forming tRNA-cmnm(5)s(2)U34. This is tRNA uridine 5-carboxymethylaminomethyl modification enzyme MnmG from Cronobacter sakazakii (strain ATCC BAA-894) (Enterobacter sakazakii).